A 393-amino-acid chain; its full sequence is Arginine biosynthesis bifunctional protein ArgJ (393 aa).

Substrate contacts are provided by threonine 142, lysine 168, threonine 179, glutamate 265, asparagine 388, and serine 393. Threonine 179 acts as the Nucleophile in catalysis.

The protein belongs to the ArgJ family. Heterotetramer of two alpha and two beta chains.

It is found in the cytoplasm. It carries out the reaction N(2)-acetyl-L-ornithine + L-glutamate = N-acetyl-L-glutamate + L-ornithine. It catalyses the reaction L-glutamate + acetyl-CoA = N-acetyl-L-glutamate + CoA + H(+). The protein operates within amino-acid biosynthesis; L-arginine biosynthesis; L-ornithine and N-acetyl-L-glutamate from L-glutamate and N(2)-acetyl-L-ornithine (cyclic): step 1/1. It participates in amino-acid biosynthesis; L-arginine biosynthesis; N(2)-acetyl-L-ornithine from L-glutamate: step 1/4. Functionally, catalyzes two activities which are involved in the cyclic version of arginine biosynthesis: the synthesis of N-acetylglutamate from glutamate and acetyl-CoA as the acetyl donor, and of ornithine by transacetylation between N(2)-acetylornithine and glutamate. In Desulfotalea psychrophila (strain LSv54 / DSM 12343), this protein is Arginine biosynthesis bifunctional protein ArgJ.